The chain runs to 66 residues: Beta-mammal toxin Cv5 (66 aa).

Positions 1–66 (KEGYIVNYYD…VWPLPKKKCN (66 aa)) constitute an LCN-type CS-alpha/beta domain. 4 disulfides stabilise this stretch: cysteine 12–cysteine 65, cysteine 16–cysteine 41, cysteine 25–cysteine 46, and cysteine 29–cysteine 48.

As to expression, expressed by the venom gland.

The protein localises to the secreted. Its activity is regulated as follows. Is susceptible to be neutralized by human antibodies scFvs 10FG2 and HV. In terms of biological role, beta toxins bind voltage-independently at site-4 of sodium channels (Nav) and reduces peak current and shifts the voltage of activation toward more negative potentials thereby affecting sodium channel activation and promoting spontaneous and repetitive firing. This toxin is moderately toxic to mice. This is Beta-mammal toxin Cv5 from Centruroides villegasi (Scorpion).